Reading from the N-terminus, the 78-residue chain is Large ribosomal subunit protein bL31 (78 aa).

Residues Cys-16, Cys-18, Cys-38, and Cys-41 each coordinate Zn(2+).

Belongs to the bacterial ribosomal protein bL31 family. Type A subfamily. In terms of assembly, part of the 50S ribosomal subunit. Requires Zn(2+) as cofactor.

Binds the 23S rRNA. This chain is Large ribosomal subunit protein bL31, found in Parafrankia sp. (strain EAN1pec).